We begin with the raw amino-acid sequence, 404 residues long: Propionate kinase PduW (404 aa).

This sequence belongs to the acetokinase family. PduW subfamily.

The protein resides in the cytoplasm. The enzyme catalyses propanoate + ATP = propanoyl phosphate + ADP. Its pathway is polyol metabolism; 1,2-propanediol degradation. The protein operates within organic acid metabolism; propanoate degradation. In terms of biological role, works with phosphate acetyltransferase (pta) to capture exogenous propionate and regenerate propionyl-CoA during degradation of propionate and 1,2-propanediol (1,2-PD). Ectopic expression partially complements a cobB deletion allowing some growth on propionate. Restores growth to an eutQ deletion on ethanolamine and tetrathionate under anoxic conditions. The sequence is that of Propionate kinase PduW from Salmonella typhimurium (strain LT2 / SGSC1412 / ATCC 700720).